The following is an 88-amino-acid chain: LYR motif-containing protein 2 (88 aa).

The N-terminal 19 residues, 1-19 (MATSRLPPATLTLKQFMRR), are a transit peptide targeting the mitochondrion.

Belongs to the complex I LYR family.

It is found in the mitochondrion. Involved in efficient integration of the N-module into mitochondrial respiratory chain complex I. This Bos taurus (Bovine) protein is LYR motif-containing protein 2 (LYRM2).